We begin with the raw amino-acid sequence, 100 residues long: Co-chaperonin GroES (100 aa).

The protein belongs to the GroES chaperonin family. Heptamer of 7 subunits arranged in a ring. Interacts with the chaperonin GroEL.

The protein resides in the cytoplasm. In terms of biological role, together with the chaperonin GroEL, plays an essential role in assisting protein folding. The GroEL-GroES system forms a nano-cage that allows encapsulation of the non-native substrate proteins and provides a physical environment optimized to promote and accelerate protein folding. GroES binds to the apical surface of the GroEL ring, thereby capping the opening of the GroEL channel. The sequence is that of Co-chaperonin GroES from Mycobacterium leprae (strain Br4923).